Consider the following 84-residue polypeptide: Exodeoxyribonuclease 7 small subunit (84 aa).

This sequence belongs to the XseB family. As to quaternary structure, heterooligomer composed of large and small subunits.

The protein resides in the cytoplasm. It catalyses the reaction Exonucleolytic cleavage in either 5'- to 3'- or 3'- to 5'-direction to yield nucleoside 5'-phosphates.. Its function is as follows. Bidirectionally degrades single-stranded DNA into large acid-insoluble oligonucleotides, which are then degraded further into small acid-soluble oligonucleotides. The sequence is that of Exodeoxyribonuclease 7 small subunit from Haemophilus influenzae (strain 86-028NP).